The following is a 730-amino-acid chain: Translation factor GUF1 homolog, mitochondrial (730 aa).

The region spanning 106 to 289 (ELIRNFCIIA…AVVVSIPPPK (184 aa)) is the tr-type G domain. Residues 115-122 (AHVDHGKS), 182-186 (DTPGH), and 236-239 (NKID) contribute to the GTP site.

It belongs to the TRAFAC class translation factor GTPase superfamily. Classic translation factor GTPase family. LepA subfamily.

Its subcellular location is the mitochondrion inner membrane. It carries out the reaction GTP + H2O = GDP + phosphate + H(+). In terms of biological role, promotes mitochondrial protein synthesis. May act as a fidelity factor of the translation reaction, by catalyzing a one-codon backward translocation of tRNAs on improperly translocated ribosomes. Binds to mitochondrial ribosomes in a GTP-dependent manner. The protein is Translation factor GUF1 homolog, mitochondrial of Theileria annulata.